The chain runs to 822 residues: Valine--tRNA ligase (822 aa).

Positions 41–51 match the 'HIGH' region motif; the sequence is PNVTGQLHLGH. The 'KMSKS' region motif lies at 511 to 515; it reads KMSKS. Lys-514 is an ATP binding site. The stretch at 765 to 822 forms a coiled coil; that stretch reads EQKGRELKEIQFLKSEILRAEKILTNKGFLEKAPREKIDLERTKLEKLKEKLVFYEKK.

This sequence belongs to the class-I aminoacyl-tRNA synthetase family. ValS type 1 subfamily. As to quaternary structure, monomer.

It is found in the cytoplasm. It catalyses the reaction tRNA(Val) + L-valine + ATP = L-valyl-tRNA(Val) + AMP + diphosphate. Its function is as follows. Catalyzes the attachment of valine to tRNA(Val). As ValRS can inadvertently accommodate and process structurally similar amino acids such as threonine, to avoid such errors, it has a 'posttransfer' editing activity that hydrolyzes mischarged Thr-tRNA(Val) in a tRNA-dependent manner. This chain is Valine--tRNA ligase, found in Mesomycoplasma hyopneumoniae (strain J / ATCC 25934 / NCTC 10110) (Mycoplasma hyopneumoniae).